The primary structure comprises 390 residues: Precorrin-6Y C(5,15)-methyltransferase [decarboxylating] (390 aa).

The protein belongs to the precorrin methyltransferase family.

The enzyme catalyses precorrin-6B + 2 S-adenosyl-L-methionine = precorrin-8X + 2 S-adenosyl-L-homocysteine + CO2 + 3 H(+). It participates in cofactor biosynthesis; adenosylcobalamin biosynthesis; cob(II)yrinate a,c-diamide from precorrin-2 (aerobic route): step 7/10. Its function is as follows. Catalyzes the methylation of both C-5 and C-15 in precorrin-6Y to form precorrin-8X. This chain is Precorrin-6Y C(5,15)-methyltransferase [decarboxylating] (cobL), found in Mycobacterium tuberculosis (strain CDC 1551 / Oshkosh).